Reading from the N-terminus, the 141-residue chain is Hemoglobin subunit alpha (141 aa).

One can recognise a Globin domain in the interval 1-141; the sequence is VLSPADKTNV…VSTVLTSKYR (141 aa). Ser-3 carries the phosphoserine modification. Lys-7 is modified (N6-succinyllysine). Thr-8 is modified (phosphothreonine). An N6-succinyllysine modification is found at Lys-11. Residue Lys-16 is modified to N6-acetyllysine; alternate. Position 16 is an N6-succinyllysine; alternate (Lys-16). Tyr-24 bears the Phosphotyrosine mark. Position 35 is a phosphoserine (Ser-35). Lys-40 carries the post-translational modification N6-succinyllysine. Ser-49 is modified (phosphoserine). Position 58 (His-58) interacts with O2. Position 87 (His-87) interacts with heme b. Phosphoserine is present on Ser-102. At Thr-108 the chain carries Phosphothreonine. A Phosphoserine modification is found at Ser-124. Phosphothreonine occurs at positions 134 and 137. Phosphoserine is present on Ser-138.

This sequence belongs to the globin family. Heterotetramer of two alpha chains and two beta chains. In terms of tissue distribution, red blood cells.

Involved in oxygen transport from the lung to the various peripheral tissues. This chain is Hemoglobin subunit alpha, found in Tamias merriami (Merriam's chipmunk).